We begin with the raw amino-acid sequence, 119 residues long: NADH-quinone oxidoreductase subunit A (119 aa).

The next 3 helical transmembrane spans lie at phenylalanine 7 to glycine 27, leucine 63 to valine 83, and isoleucine 88 to alanine 108.

This sequence belongs to the complex I subunit 3 family. In terms of assembly, NDH-1 is composed of 14 different subunits. Subunits NuoA, H, J, K, L, M, N constitute the membrane sector of the complex.

Its subcellular location is the cell inner membrane. The enzyme catalyses a quinone + NADH + 5 H(+)(in) = a quinol + NAD(+) + 4 H(+)(out). Its function is as follows. NDH-1 shuttles electrons from NADH, via FMN and iron-sulfur (Fe-S) centers, to quinones in the respiratory chain. The immediate electron acceptor for the enzyme in this species is believed to be ubiquinone. Couples the redox reaction to proton translocation (for every two electrons transferred, four hydrogen ions are translocated across the cytoplasmic membrane), and thus conserves the redox energy in a proton gradient. This chain is NADH-quinone oxidoreductase subunit A, found in Paraburkholderia phytofirmans (strain DSM 17436 / LMG 22146 / PsJN) (Burkholderia phytofirmans).